Consider the following 234-residue polypeptide: Iron-sulfur cluster co-chaperone protein HscB (234 aa).

Positions 40, 43, 57, and 60 each coordinate a divalent metal cation. The 73-residue stretch at 71-143 (DYFSLMNCNR…LTRGLYLLKL (73 aa)) folds into the J domain.

It belongs to the HscB family. As to quaternary structure, interacts with ISCU and HSPA9 to form an iron-sulfur transfer complex. Interacts with SDHAF1 (via the first LYR motif); the interaction recruits the iron-sulfur transfer complex composed of HSC20, HSPA9 and ISCU and mediates the incorporation of iron-sulfur clusters into SDHB which also interacts with HSC20. Interacts with the cytoplasmic form of ISCU and with CIA complex member CIAO1 (via LYR motif). Homodimer. Interacts with ISCU (cytoplasmic form); this interaction stabilizes the (Fe-S) clusters on ISCU. Interacts with the CIA complex member CIAO1 (via LYR motif).

The protein resides in the cytoplasm. Its subcellular location is the mitochondrion. It participates in cofactor biosynthesis; iron-sulfur cluster biosynthesis. Its function is as follows. Acts as a co-chaperone in iron-sulfur cluster assembly in mitochondria. Required for incorporation of iron-sulfur clusters into SDHB, the iron-sulfur protein subunit of succinate dehydrogenase that is involved in complex II of the mitochondrial electron transport chain. Recruited to SDHB by interaction with SDHAF1 which first binds SDHB and then recruits the iron-sulfur transfer complex formed by HSC20, HSPA9 and ISCU through direct binding to HSC20. Plays an essential role in hematopoiesis. Functionally, acts as a co-chaperone in iron-sulfur cluster assembly in the cytoplasm. Also mediates complex formation between components of the cytosolic iron-sulfur biogenesis pathway and the CIA targeting complex composed of CIAO1, DIPK1B/FAM69B and MMS19 by binding directly to the scaffold protein ISCU and to CIAO1. This facilitates iron-sulfur cluster insertion into a number of cytoplasmic and nuclear proteins including POLD1, ELP3, DPYD and PPAT. The polypeptide is Iron-sulfur cluster co-chaperone protein HscB (Mus musculus (Mouse)).